The chain runs to 172 residues: Adenine phosphoribosyltransferase (172 aa).

The protein belongs to the purine/pyrimidine phosphoribosyltransferase family. Homodimer.

The protein resides in the cytoplasm. It catalyses the reaction AMP + diphosphate = 5-phospho-alpha-D-ribose 1-diphosphate + adenine. The protein operates within purine metabolism; AMP biosynthesis via salvage pathway; AMP from adenine: step 1/1. Catalyzes a salvage reaction resulting in the formation of AMP, that is energically less costly than de novo synthesis. This Anaeromyxobacter dehalogenans (strain 2CP-1 / ATCC BAA-258) protein is Adenine phosphoribosyltransferase.